Here is a 399-residue protein sequence, read N- to C-terminus: Coenzyme A biosynthesis bifunctional protein CoaBC (399 aa).

The tract at residues 1–190 (MQSLAGKKIL…FAPKILVGKR (190 aa)) is phosphopantothenoylcysteine decarboxylase. Residue C159 is the Proton donor of the active site. The segment at 191–399 (VLITAGPTRE…AVMHLIHEQM (209 aa)) is phosphopantothenate--cysteine ligase. CTP-binding positions include D279, K289, 307–310 (PDIV), F326, K340, and K344.

In the N-terminal section; belongs to the HFCD (homo-oligomeric flavin containing Cys decarboxylase) superfamily. This sequence in the C-terminal section; belongs to the PPC synthetase family. Mg(2+) is required as a cofactor. The cofactor is FMN.

It catalyses the reaction N-[(R)-4-phosphopantothenoyl]-L-cysteine + H(+) = (R)-4'-phosphopantetheine + CO2. The enzyme catalyses (R)-4'-phosphopantothenate + L-cysteine + CTP = N-[(R)-4-phosphopantothenoyl]-L-cysteine + CMP + diphosphate + H(+). It functions in the pathway cofactor biosynthesis; coenzyme A biosynthesis; CoA from (R)-pantothenate: step 2/5. Its pathway is cofactor biosynthesis; coenzyme A biosynthesis; CoA from (R)-pantothenate: step 3/5. Functionally, catalyzes two sequential steps in the biosynthesis of coenzyme A. In the first step cysteine is conjugated to 4'-phosphopantothenate to form 4-phosphopantothenoylcysteine. In the second step the latter compound is decarboxylated to form 4'-phosphopantotheine. The protein is Coenzyme A biosynthesis bifunctional protein CoaBC of Vibrio cholerae serotype O1 (strain ATCC 39315 / El Tor Inaba N16961).